Consider the following 665-residue polypeptide: Fermitin family homolog 3 (665 aa).

The residue at position 11 (Tyr-11) is a Phosphotyrosine. Positions 229-556 (WLDSSRCLMQ…SLPDFGISYV (328 aa)) constitute an FERM domain. The region spanning 354 to 453 (DHLRIFRPRK…WMAGCRLASK (100 aa)) is the PH domain. Tyr-502 is subject to Phosphotyrosine. Phosphothreonine is present on Thr-589.

It belongs to the kindlin family. Interacts with ITGB1, ITGB2 and ITGB3 (via cytoplasmic tails).

The protein resides in the cell projection. It localises to the podosome. Its function is as follows. Plays a central role in cell adhesion in hematopoietic cells. Acts by activating the integrin beta-1-3 (ITGB1, ITGB2 and ITGB3). Required for integrin-mediated platelet adhesion and leukocyte adhesion to endothelial cells. Required for activation of integrin beta-2 (ITGB2) in polymorphonuclear granulocytes (PMNs). This is Fermitin family homolog 3 (FERMT3) from Bos taurus (Bovine).